The chain runs to 178 residues: Photosystem I assembly protein Ycf4 (178 aa).

A run of 2 helical transmembrane segments spans residues 19–39 (FLVA…SLSS) and 61–81 (LVMG…WYVI).

It belongs to the Ycf4 family.

The protein localises to the cellular thylakoid membrane. Its function is as follows. Seems to be required for the assembly of the photosystem I complex. In Synechococcus sp. (strain CC9902), this protein is Photosystem I assembly protein Ycf4.